We begin with the raw amino-acid sequence, 236 residues long: tRNA (guanine-N(1)-)-methyltransferase (236 aa).

S-adenosyl-L-methionine-binding positions include Gly114 and Ile134–Leu139.

The protein belongs to the RNA methyltransferase TrmD family. Homodimer.

It is found in the cytoplasm. The catalysed reaction is guanosine(37) in tRNA + S-adenosyl-L-methionine = N(1)-methylguanosine(37) in tRNA + S-adenosyl-L-homocysteine + H(+). Functionally, specifically methylates guanosine-37 in various tRNAs. This Wolbachia pipientis wMel protein is tRNA (guanine-N(1)-)-methyltransferase.